A 190-amino-acid polypeptide reads, in one-letter code: 7-methyl-GTP pyrophosphatase (190 aa).

The active-site Proton acceptor is Asp-69.

It belongs to the Maf family. YceF subfamily. The cofactor is a divalent metal cation.

The protein localises to the cytoplasm. It carries out the reaction N(7)-methyl-GTP + H2O = N(7)-methyl-GMP + diphosphate + H(+). In terms of biological role, nucleoside triphosphate pyrophosphatase that hydrolyzes 7-methyl-GTP (m(7)GTP). May have a dual role in cell division arrest and in preventing the incorporation of modified nucleotides into cellular nucleic acids. The polypeptide is 7-methyl-GTP pyrophosphatase (Xanthomonas oryzae pv. oryzae (strain MAFF 311018)).